The chain runs to 229 residues: Heptaprenylglyceryl phosphate synthase (229 aa).

Lysine 12 contacts sn-glycerol 1-phosphate. Mg(2+) contacts are provided by aspartate 14 and serine 40. Sn-glycerol 1-phosphate contacts are provided by residues 159–164, glycine 189, and 209–210; these read YLEYSG and GN.

It belongs to the GGGP/HepGP synthase family. Group I subfamily. As to quaternary structure, homodimer. It depends on Mg(2+) as a cofactor.

It carries out the reaction sn-glycerol 1-phosphate + all-trans-heptaprenyl diphosphate = 3-heptaprenyl-sn-glycero-1-phosphate + diphosphate. The protein operates within membrane lipid metabolism; glycerophospholipid metabolism. Functionally, prenyltransferase that catalyzes in vivo the transfer of the heptaprenyl moiety of heptaprenyl pyrophosphate (HepPP; 35 carbon atoms) to the C3 hydroxyl of sn-glycerol-1-phosphate (G1P), producing heptaprenylglyceryl phosphate (HepGP). This reaction is an ether-bond-formation step in the biosynthesis of archaea-type G1P-based membrane lipids found in Bacillales. The sequence is that of Heptaprenylglyceryl phosphate synthase from Bacillus cereus (strain ATCC 10987 / NRS 248).